The sequence spans 246 residues: Type III pantothenate kinase (246 aa).

6-13 (DVGNTHSV) contributes to the ATP binding site. Substrate is bound at residue 103–106 (GADR). Catalysis depends on aspartate 105, which acts as the Proton acceptor. Aspartate 125 serves as a coordination point for K(+). Residue threonine 128 participates in ATP binding. Threonine 179 contributes to the substrate binding site.

This sequence belongs to the type III pantothenate kinase family. Homodimer. Requires NH4(+) as cofactor. K(+) serves as cofactor.

The protein localises to the cytoplasm. The catalysed reaction is (R)-pantothenate + ATP = (R)-4'-phosphopantothenate + ADP + H(+). It participates in cofactor biosynthesis; coenzyme A biosynthesis; CoA from (R)-pantothenate: step 1/5. In terms of biological role, catalyzes the phosphorylation of pantothenate (Pan), the first step in CoA biosynthesis. The protein is Type III pantothenate kinase (coaX) of Thermotoga maritima (strain ATCC 43589 / DSM 3109 / JCM 10099 / NBRC 100826 / MSB8).